The following is a 176-amino-acid chain: MPLNLEDKRAIVASVNAVAAEALSAVVADYRGLTVSQMTELRSKARETGVYLKVVRNTLAKFAVKDTEFECLNDALVGPTVLAFSKDDPGAAARLIKDFAKDHDALEVKALAVGGVTYGAQDIDVLAKLPTRDEAISQLMSVMQAPVAKFVRTLNEVPGKFVRTVAAVKDQKQSAA.

This sequence belongs to the universal ribosomal protein uL10 family. In terms of assembly, part of the ribosomal stalk of the 50S ribosomal subunit. The N-terminus interacts with L11 and the large rRNA to form the base of the stalk. The C-terminus forms an elongated spine to which L12 dimers bind in a sequential fashion forming a multimeric L10(L12)X complex.

In terms of biological role, forms part of the ribosomal stalk, playing a central role in the interaction of the ribosome with GTP-bound translation factors. In Alcanivorax borkumensis (strain ATCC 700651 / DSM 11573 / NCIMB 13689 / SK2), this protein is Large ribosomal subunit protein uL10.